Reading from the N-terminus, the 397-residue chain is uncharacterized protein (397 aa).

12 consecutive transmembrane segments (helical) span residues 10–30, 48–68, 76–96, 106–126, 141–161, 165–185, 209–229, 242–262, 274–294, 296–316, 334–354, and 363–383; these read FIIF…YAVM, GLLV…VTII, PVLL…ALAP, ILSA…ASEM, GGLT…GDVL, AVFS…MAAV, LFSF…YTFI, VGIT…NFFA, MIGV…IAIY, AAAI…PPLL, VSVS…GMIL, and LFAG…FAHL.

This sequence belongs to the major facilitator superfamily.

The protein resides in the cell membrane. This is an uncharacterized protein from Bacillus subtilis (strain 168).